The following is a 218-amino-acid chain: Small ribosomal subunit protein uS3 (218 aa).

In terms of domain architecture, KH type-2 spans 38 to 106 (IRDYVAKRLS…RVHINIVEIK (69 aa)).

This sequence belongs to the universal ribosomal protein uS3 family. In terms of assembly, part of the 30S ribosomal subunit. Forms a tight complex with proteins S10 and S14.

In terms of biological role, binds the lower part of the 30S subunit head. Binds mRNA in the 70S ribosome, positioning it for translation. The protein is Small ribosomal subunit protein uS3 of Listeria monocytogenes serotype 4b (strain F2365).